A 306-amino-acid polypeptide reads, in one-letter code: Pseudouridine-5'-phosphate glycosidase (306 aa).

E27 acts as the Proton donor in catalysis. Residues K88 and V108 each coordinate substrate. D140 contacts Mn(2+). Substrate is bound at residue 142–144; sequence SAD. Catalysis depends on K161, which acts as the Nucleophile.

This sequence belongs to the pseudouridine-5'-phosphate glycosidase family. In terms of assembly, homotrimer. Mn(2+) is required as a cofactor.

It catalyses the reaction D-ribose 5-phosphate + uracil = psi-UMP + H2O. Its function is as follows. Catalyzes the reversible cleavage of pseudouridine 5'-phosphate (PsiMP) to ribose 5-phosphate and uracil. Functions biologically in the cleavage direction, as part of a pseudouridine degradation pathway. In Petrotoga mobilis (strain DSM 10674 / SJ95), this protein is Pseudouridine-5'-phosphate glycosidase.